The sequence spans 280 residues: MRKPEVAIAASTHQVKKMKKGLWSPEEDSKLMQYMLSNGQGCWSDVAKNAGLQRCGKSCRLRWINYLRPDLKRGAFSPQEEDLIIRFHSILGNRWSQIAARLPGRTDNEIKNFWNSTIKKRLKKMSDTSNLINNSSSSPNTASDSSSNSASSLDIKDIIGSFMSLQEQGFVNPSLTHIQTNNPFPTGNMISHPCNDDFTPYVDGIYGVNAGVQGELYFPPLECEEGDWYNANINNHLDELNTNGSGNAPEGMRPVEEFWDLDQLMNTEVPSFYFNFKQSI.

HTH myb-type domains follow at residues 15–67 (VKKM…INYL) and 68–122 (RPDL…KKRL). DNA-binding regions (H-T-H motif) lie at residues 43–67 (WSDV…INYL) and 95–118 (WSQI…NSTI). The tract at residues 129-150 (SNLINNSSSSPNTASDSSSNSA) is disordered.

In terms of tissue distribution, expressed at low levels in stems and siliques, specifically in xylem.

The protein resides in the nucleus. Transcription activator. Involved in the regulation of secondary wall biosynthesis in fibers and vessels. Transcription activator of the mannan synthase CSLA9 that recognizes and binds to the DNA consensus sequence 5'-[AG][GT]T[AT]GGT[GA]-3' cis-regulatory element of CSLA9 promoter. Transcription factor that acts as a molecular switch in the NAC012/SND1-mediated transcriptional network regulating secondary wall biosynthesis. Is directly activated by NAC012/SND1. Functions redundantly with MYB83 in the transcriptional regulatory cascade leading to secondary wall formation in fibers and vessels. Transcription activator that binds to the DNA consensus sequence 5'-ACC[AT]A[AC][TC]-3', designated as the secondary wall MYB-responsive element (SMRE). Regulates directly numerous transcription factors and a number of genes involved in secondary wall biosynthesis that contain SMRE elements in their promoters. Is an obligate component of the transcriptional regulatory complex toward the commitment of secondary wall cellulose synthesis. Is required for functional expression of the three secondary wall CESA genes, CESA4, CESA7 and CESA8. The protein is Transcription factor MYB46 of Arabidopsis thaliana (Mouse-ear cress).